The sequence spans 194 residues: Inosine triphosphate pyrophosphatase (194 aa).

8-13 (TGNANK) is a binding site for ITP. Glu47 contributes to the Mg(2+) binding site. ITP contacts are provided by residues Lys59, 75–76 (DT), Lys92, 151–154 (FGWD), Lys174, and 179–180 (HR).

The protein belongs to the HAM1 NTPase family. In terms of assembly, homodimer. Requires Mg(2+) as cofactor. Mn(2+) is required as a cofactor.

It is found in the cytoplasm. The protein localises to the nucleus. It carries out the reaction ITP + H2O = IMP + diphosphate + H(+). It catalyses the reaction dITP + H2O = dIMP + diphosphate + H(+). The enzyme catalyses XTP + H2O = XMP + diphosphate + H(+). Pyrophosphatase that hydrolyzes non-canonical purine nucleotides such as inosine triphosphate (ITP), deoxyinosine triphosphate (dITP) or xanthosine 5'-triphosphate (XTP) to their respective monophosphate derivatives. The enzyme does not distinguish between the deoxy- and ribose forms. Probably excludes non-canonical purines from RNA and DNA precursor pools, thus preventing their incorporation into RNA and DNA and avoiding chromosomal lesions. The protein is Inosine triphosphate pyrophosphatase of Scheffersomyces stipitis (strain ATCC 58785 / CBS 6054 / NBRC 10063 / NRRL Y-11545) (Yeast).